The sequence spans 896 residues: Rho GTPase-activating protein gacM (896 aa).

Residues 1–97 form a disordered region; the sequence is MSSFIGWKKN…SSNDTIGKSS (97 aa). Positions 10-26 are enriched in low complexity; sequence NSNSGGTPGASPTSSSP. Polar residues predominate over residues 27–38; that stretch reads LNSTISNANSVS. Composition is skewed to low complexity over residues 45-57 and 65-97; these read SISN…LSSS and NSNN…GKSS. In terms of domain architecture, Rho-GAP spans 139 to 330; sequence QPINPNTEFG…LWIEEFDMIS (192 aa). Low complexity-rich tracts occupy residues 375 to 391, 400 to 427, 448 to 460, and 473 to 506; these read IQQQ…QSHP, SSLS…LLPT, PTPT…TPQT, and NNNS…NNNN. Disordered regions lie at residues 375-514 and 701-770; these read IQQQ…GSPL and LPTG…ENQI. Polar residues predominate over residues 702–711; it reads PTGSSWSDFE. 2 stretches are compositionally biased toward low complexity: residues 712–743 and 751–761; these read NNSS…NSSP and SNGLNSSSNSN.

It is found in the cytoplasm. Rho GTPase-activating protein involved in the signal transduction pathway. In Dictyostelium discoideum (Social amoeba), this protein is Rho GTPase-activating protein gacM (gacM).